A 466-amino-acid chain; its full sequence is Ribulose bisphosphate carboxylase large chain (466 aa).

Lys5 carries the N6,N6,N6-trimethyllysine modification. The substrate site is built by Asn114 and Thr164. The Proton acceptor role is filled by Lys166. Lys168 lines the substrate pocket. 3 residues coordinate Mg(2+): Lys192, Asp194, and Glu195. Lys192 carries the N6-carboxylysine modification. Residue His285 is the Proton acceptor of the active site. Residues Arg286, His318, and Ser370 each contribute to the substrate site.

Belongs to the RuBisCO large chain family. Type I subfamily. Heterohexadecamer of 8 large chains and 8 small chains; disulfide-linked. The disulfide link is formed within the large subunit homodimers. Requires Mg(2+) as cofactor. The disulfide bond which can form in the large chain dimeric partners within the hexadecamer appears to be associated with oxidative stress and protein turnover.

The protein localises to the plastid. Its subcellular location is the chloroplast. It carries out the reaction 2 (2R)-3-phosphoglycerate + 2 H(+) = D-ribulose 1,5-bisphosphate + CO2 + H2O. The enzyme catalyses D-ribulose 1,5-bisphosphate + O2 = 2-phosphoglycolate + (2R)-3-phosphoglycerate + 2 H(+). RuBisCO catalyzes two reactions: the carboxylation of D-ribulose 1,5-bisphosphate, the primary event in carbon dioxide fixation, as well as the oxidative fragmentation of the pentose substrate in the photorespiration process. Both reactions occur simultaneously and in competition at the same active site. This is Ribulose bisphosphate carboxylase large chain from Aesculus pavia (Red buckeye).